The primary structure comprises 650 residues: MMNAQTTKIALLLAASAVTMALTGCGGSDGNDGNPGEPGGEPAPAIQILNFTFDKSVITNGVPSVEFTVTNENDLPVVGLQKMRFAAAQLIPQGATGAGNASQWQYFGDETCDVAATCPGTFVDQKNGHYSYTFNMNLTANAKITYNDQLAQRVLIRAYNTPLPDGTQVPNSNAFVDFTADTGAAPTYSRKIVATESCNTCHQDLANVKHGGAYSDVNYCATCHTAGKVGVGKEFNVLVHAKHKDLTLGSLESCQSCHAANDAAPDWGNWSRIPTAATCGSCHSTVDFAAGKGHSQQLDNSNCIACHNSDWTAELHTGKTADKKAVIAQLGMQATLVGQTDDTAVLTVSILDKDGNAIDAATVQDKIKRLETVTNVGPNFPIMGYNKSPGSGAAKIAKDLVKDGALQAGVTLVDGKLVFTTPALPFGTGDTDTAFTFIGLEMCSTGTSLTACTVDSATTSMKAELAFGTKSGNAPSMRHVNSVNFSTCQGCHSDTFEIHKGHHSGFVMTEQVSHAKDANGKAIVGVDGCVACHTPDGTYASGANKGAFEMKLHVIHGEQGVIKECTQCHNDFNLDAFKVKGALATSAGKYTTPITATCTSCHAPESIGHGLENMGAIVNGDYVQANQAAQSETCFYCHKPTPTDHTQVKM.

Residues 1 to 21 form the signal peptide; it reads MMNAQTTKIALLLAASAVTMA.

This Shewanella baltica (strain OS185) protein is Multiheme cytochrome MtrC (mtrC).